Consider the following 299-residue polypeptide: GTPase Era (299 aa).

The Era-type G domain maps to 4-171; the sequence is KSGFVAILGR…ISLLTDNLEE (168 aa). A G1 region spans residues 12 to 19; that stretch reads GRPNVGKS. 12 to 19 contacts GTP; the sequence is GRPNVGKS. The interval 38–42 is G2; it reads QTTRN. Positions 59–62 are G3; that stretch reads DTPG. GTP is bound by residues 59–63 and 121–124; these read DTPGI and NKID. Positions 121–124 are G4; the sequence is NKID. Residues 150 to 152 are G5; sequence ISA. Positions 202–280 constitute a KH type-2 domain; it reads TQQEIPHSVA…YLETWVKVKK (79 aa).

It belongs to the TRAFAC class TrmE-Era-EngA-EngB-Septin-like GTPase superfamily. Era GTPase family. In terms of assembly, monomer.

It localises to the cytoplasm. The protein localises to the cell membrane. In terms of biological role, an essential GTPase that binds both GDP and GTP, with rapid nucleotide exchange. Plays a role in 16S rRNA processing and 30S ribosomal subunit biogenesis and possibly also in cell cycle regulation and energy metabolism. The polypeptide is GTPase Era (Streptococcus uberis (strain ATCC BAA-854 / 0140J)).